The primary structure comprises 490 residues: Protein nucleotidyltransferase YdiU (490 aa).

The ATP site is built by Gly-86, Gly-88, Arg-89, Lys-109, Asp-121, Gly-122, Arg-172, and Arg-179. Residue Asp-248 is the Proton acceptor of the active site. Positions 249 and 258 each coordinate Mg(2+). Asp-258 serves as a coordination point for ATP.

It belongs to the SELO family. Requires Mg(2+) as cofactor. The cofactor is Mn(2+).

It catalyses the reaction L-seryl-[protein] + ATP = 3-O-(5'-adenylyl)-L-seryl-[protein] + diphosphate. The enzyme catalyses L-threonyl-[protein] + ATP = 3-O-(5'-adenylyl)-L-threonyl-[protein] + diphosphate. The catalysed reaction is L-tyrosyl-[protein] + ATP = O-(5'-adenylyl)-L-tyrosyl-[protein] + diphosphate. It carries out the reaction L-histidyl-[protein] + UTP = N(tele)-(5'-uridylyl)-L-histidyl-[protein] + diphosphate. It catalyses the reaction L-seryl-[protein] + UTP = O-(5'-uridylyl)-L-seryl-[protein] + diphosphate. The enzyme catalyses L-tyrosyl-[protein] + UTP = O-(5'-uridylyl)-L-tyrosyl-[protein] + diphosphate. Functionally, nucleotidyltransferase involved in the post-translational modification of proteins. It can catalyze the addition of adenosine monophosphate (AMP) or uridine monophosphate (UMP) to a protein, resulting in modifications known as AMPylation and UMPylation. The chain is Protein nucleotidyltransferase YdiU from Rhizobium meliloti (strain 1021) (Ensifer meliloti).